A 157-amino-acid polypeptide reads, in one-letter code: Protein Smg homolog (157 aa).

It belongs to the Smg family.

The protein is Protein Smg homolog of Xanthomonas euvesicatoria pv. vesicatoria (strain 85-10) (Xanthomonas campestris pv. vesicatoria).